The chain runs to 143 residues: Peptide methionine sulfoxide reductase MsrB (143 aa).

The MsrB domain occupies 16 to 139 (DAELRRRLTP…NSAALNFESR (124 aa)). The Zn(2+) site is built by C55, C58, C104, and C107. The Nucleophile role is filled by C128.

It belongs to the MsrB Met sulfoxide reductase family. It depends on Zn(2+) as a cofactor.

It catalyses the reaction L-methionyl-[protein] + [thioredoxin]-disulfide + H2O = L-methionyl-(R)-S-oxide-[protein] + [thioredoxin]-dithiol. The chain is Peptide methionine sulfoxide reductase MsrB from Burkholderia cenocepacia (strain ATCC BAA-245 / DSM 16553 / LMG 16656 / NCTC 13227 / J2315 / CF5610) (Burkholderia cepacia (strain J2315)).